Reading from the N-terminus, the 259-residue chain is 5'-nucleotidase SurE (259 aa).

Residues aspartate 8, aspartate 9, serine 40, and asparagine 92 each contribute to the a divalent metal cation site.

The protein belongs to the SurE nucleotidase family. A divalent metal cation is required as a cofactor.

The protein localises to the cytoplasm. The catalysed reaction is a ribonucleoside 5'-phosphate + H2O = a ribonucleoside + phosphate. Its function is as follows. Nucleotidase that shows phosphatase activity on nucleoside 5'-monophosphates. In Stenotrophomonas maltophilia (strain K279a), this protein is 5'-nucleotidase SurE.